The chain runs to 507 residues: MTASIKIQPDIDSLKQLQQQNDDSSINMYPVYAYLPSLDLTPHVAYLKLAQLNNPDRKESFLLESAKTNNELDRYSFIGISPRKTIKTGPTEGIETDPLEILEKEMSTFKVAENVPGLPKLSGGAIGYISYDCVRYFEPKTRRPLKDVLRLPEAYLMLCDTIIAFDNVFQRFQIIHNINTNETSLEEGYQAAAQIITDIVSKLTDDSSPIPYPEQPPIKLNQTFESNVGKEGYENHVSTLKKHIKKGDIIQGVPSQRVARPTSLHPFNIYRHLRTVNPSPYLFYIDCLDFQIIGASPELLCKSDSKNRVITHPIAGTVKRGATTEEDDALADQLRGSLKDRAEHVMLVDLARNDINRICDPLTTSVDKLLTIQKFSHVQHLVSQVSGVLRPEKTRFDAFRSIFPAGTVSGAPKVRAMELIAELEGERRGVYAGAVGHWSYDGKTMDNCIALRTMVYKDGIAYLQAGGGIVYDSDEYDEYVETMNKMMANHSTIVQAEELWADIVGSA.

S65 is a binding site for L-tryptophan. At S81 the chain carries Phosphoserine. T223 is modified (phosphothreonine). Residue 280-282 (PYL) participates in L-tryptophan binding. Chorismate is bound at residue 316-317 (GT). A Mg(2+)-binding site is contributed by E343. Chorismate-binding positions include Y431, R452, 466-468 (GGG), and G468. Residue E481 coordinates Mg(2+).

Belongs to the anthranilate synthase component I family. Tetramer of two components I and two components II. Requires Mg(2+) as cofactor.

It carries out the reaction chorismate + L-glutamine = anthranilate + pyruvate + L-glutamate + H(+). It participates in amino-acid biosynthesis; L-tryptophan biosynthesis; L-tryptophan from chorismate: step 1/5. The protein is Anthranilate synthase component 1 (TRP2) of Saccharomyces cerevisiae (strain ATCC 204508 / S288c) (Baker's yeast).